The sequence spans 279 residues: Putative pyruvate, phosphate dikinase regulatory protein (279 aa).

Glycine 153 to threonine 160 contacts ADP.

Belongs to the pyruvate, phosphate/water dikinase regulatory protein family. PDRP subfamily.

It carries out the reaction N(tele)-phospho-L-histidyl/L-threonyl-[pyruvate, phosphate dikinase] + ADP = N(tele)-phospho-L-histidyl/O-phospho-L-threonyl-[pyruvate, phosphate dikinase] + AMP + H(+). The catalysed reaction is N(tele)-phospho-L-histidyl/O-phospho-L-threonyl-[pyruvate, phosphate dikinase] + phosphate + H(+) = N(tele)-phospho-L-histidyl/L-threonyl-[pyruvate, phosphate dikinase] + diphosphate. In terms of biological role, bifunctional serine/threonine kinase and phosphorylase involved in the regulation of the pyruvate, phosphate dikinase (PPDK) by catalyzing its phosphorylation/dephosphorylation. The chain is Putative pyruvate, phosphate dikinase regulatory protein from Bartonella bacilliformis (strain ATCC 35685 / KC583 / Herrer 020/F12,63).